The following is a 344-amino-acid chain: 3-isopropylmalate dehydrogenase (344 aa).

Substrate is bound by residues arginine 93, arginine 103, arginine 131, and aspartate 215. Residues aspartate 215, aspartate 239, and aspartate 243 each coordinate Mg(2+). 273-285 (GSAPDIAGKGIAN) contributes to the NAD(+) binding site.

The protein belongs to the isocitrate and isopropylmalate dehydrogenases family. LeuB type 1 subfamily. Homodimer. Mg(2+) is required as a cofactor. Requires Mn(2+) as cofactor.

The protein resides in the cytoplasm. The catalysed reaction is (2R,3S)-3-isopropylmalate + NAD(+) = 4-methyl-2-oxopentanoate + CO2 + NADH. It participates in amino-acid biosynthesis; L-leucine biosynthesis; L-leucine from 3-methyl-2-oxobutanoate: step 3/4. Functionally, catalyzes the oxidation of 3-carboxy-2-hydroxy-4-methylpentanoate (3-isopropylmalate) to 3-carboxy-4-methyl-2-oxopentanoate. The product decarboxylates to 4-methyl-2 oxopentanoate. The sequence is that of 3-isopropylmalate dehydrogenase from Streptococcus mutans serotype c (strain ATCC 700610 / UA159).